A 226-amino-acid chain; its full sequence is Deoxyribose-phosphate aldolase (226 aa).

Asp96 functions as the Proton donor/acceptor in the catalytic mechanism. Lys157 (schiff-base intermediate with acetaldehyde) is an active-site residue. The active-site Proton donor/acceptor is the Lys185.

It belongs to the DeoC/FbaB aldolase family. DeoC type 1 subfamily.

It localises to the cytoplasm. It catalyses the reaction 2-deoxy-D-ribose 5-phosphate = D-glyceraldehyde 3-phosphate + acetaldehyde. The protein operates within carbohydrate degradation; 2-deoxy-D-ribose 1-phosphate degradation; D-glyceraldehyde 3-phosphate and acetaldehyde from 2-deoxy-alpha-D-ribose 1-phosphate: step 2/2. Catalyzes a reversible aldol reaction between acetaldehyde and D-glyceraldehyde 3-phosphate to generate 2-deoxy-D-ribose 5-phosphate. In Trichormus variabilis (strain ATCC 29413 / PCC 7937) (Anabaena variabilis), this protein is Deoxyribose-phosphate aldolase.